We begin with the raw amino-acid sequence, 119 residues long: MKIALIAHDKKKEDIIEFSKKYKDVLAKYELVATGTTGTKISEATGLEVKRYLSGPYGGDQQLGGRIAEGKIDLVIFFTDPLTAQPHEPDVSALLRVCNVHNVAVVTNIKTAELIIKQF.

Residues 1-119 form the MGS-like domain; it reads MKIALIAHDK…KTAELIIKQF (119 aa). Substrate-binding positions include histidine 8, lysine 12, 34 to 37, and 54 to 55; these read TGTT and SG. Aspartate 60 serves as the catalytic Proton donor/acceptor. Histidine 87 contacts substrate.

Belongs to the methylglyoxal synthase family.

The enzyme catalyses dihydroxyacetone phosphate = methylglyoxal + phosphate. In terms of biological role, catalyzes the formation of methylglyoxal from dihydroxyacetone phosphate. This is Methylglyoxal synthase from Clostridium beijerinckii (strain ATCC 51743 / NCIMB 8052) (Clostridium acetobutylicum).